A 204-amino-acid polypeptide reads, in one-letter code: Thymidine kinase (204 aa).

Residues 23–30 (GSMFSGKT) and 95–98 (DEAQ) contribute to the ATP site. Catalysis depends on glutamate 96, which acts as the Proton acceptor. Positions 152, 155, 184, and 187 each coordinate Zn(2+).

It belongs to the thymidine kinase family. Homotetramer.

The protein resides in the cytoplasm. It carries out the reaction thymidine + ATP = dTMP + ADP + H(+). The sequence is that of Thymidine kinase from Porphyromonas gingivalis (strain ATCC BAA-308 / W83).